Reading from the N-terminus, the 81-residue chain is Small ribosomal subunit protein bS16 (81 aa).

It belongs to the bacterial ribosomal protein bS16 family.

In Acetivibrio thermocellus (strain ATCC 27405 / DSM 1237 / JCM 9322 / NBRC 103400 / NCIMB 10682 / NRRL B-4536 / VPI 7372) (Clostridium thermocellum), this protein is Small ribosomal subunit protein bS16.